The chain runs to 371 residues: Geranylgeranyl pyrophosphate synthase paxG (371 aa).

Residues Lys-89, Arg-92, and His-121 each coordinate isopentenyl diphosphate. 2 residues coordinate Mg(2+): Asp-128 and Asp-132. Residue Arg-137 coordinates dimethylallyl diphosphate. Arg-138 is a binding site for isopentenyl diphosphate. The dimethylallyl diphosphate site is built by Lys-215, Thr-216, and Gln-249. A Mg(2+)-binding site is contributed by Asp-252. Dimethylallyl diphosphate-binding residues include Asn-256, Lys-266, and Lys-276. The Peroxisomal targeting signal motif lies at 369 to 371 (GRV).

Belongs to the FPP/GGPP synthase family. Mg(2+) serves as cofactor.

The protein resides in the peroxisome. It carries out the reaction isopentenyl diphosphate + dimethylallyl diphosphate = (2E)-geranyl diphosphate + diphosphate. The enzyme catalyses isopentenyl diphosphate + (2E)-geranyl diphosphate = (2E,6E)-farnesyl diphosphate + diphosphate. It catalyses the reaction isopentenyl diphosphate + (2E,6E)-farnesyl diphosphate = (2E,6E,10E)-geranylgeranyl diphosphate + diphosphate. The protein operates within secondary metabolite biosynthesis. Geranylgeranyl pyrophosphate synthase; part of the gene cluster that mediates the biosynthesis of paxilline, a mycotoxin that acts as an inhibitor of mammalian maxi-K channels. PaxG, the geranylgeranyl diphosphate (GGPP) synthase is proposed to catalyze the first step in paxilline biosynthesis. Condensation of indole-3-glycerol phosphate with GGPP by paxC then forms 3-geranylgeranylindole (3-GGI), followed by epoxidation and cyclization of this intermediate (by paxM and paxB) to form paspaline. Paspaline is subsequently converted to 13-desoxypaxilline by paxP, the latter being then converted to paxilline by paxQ. Finally paxilline can be mono- and di-prenylated by paxD. This chain is Geranylgeranyl pyrophosphate synthase paxG, found in Penicillium paxilli.